The sequence spans 1294 residues: Phosphoribosylformylglycinamidine synthase (1294 aa).

The tract at residues 303-325 is disordered; the sequence is WPGAATGSGGEIRDEGATGRGSK. ATP is bound by residues 305-316, 384-386, and Ala-676; these read GAATGSGGEIRD and TGY. Mg(2+) contacts are provided by Asp-677, Glu-716, Asn-720, and Asp-883. Position 885 (Ser-885) interacts with ATP. The region spanning 1041–1294 is the Glutamine amidotransferase type-1 domain; that stretch reads VAVLREQGVN…MFRNARRQLG (254 aa). Cys-1134 acts as the Nucleophile in catalysis. Active-site residues include His-1259 and Glu-1261.

It in the N-terminal section; belongs to the FGAMS family. In terms of assembly, monomer.

It localises to the cytoplasm. The catalysed reaction is N(2)-formyl-N(1)-(5-phospho-beta-D-ribosyl)glycinamide + L-glutamine + ATP + H2O = 2-formamido-N(1)-(5-O-phospho-beta-D-ribosyl)acetamidine + L-glutamate + ADP + phosphate + H(+). The protein operates within purine metabolism; IMP biosynthesis via de novo pathway; 5-amino-1-(5-phospho-D-ribosyl)imidazole from N(2)-formyl-N(1)-(5-phospho-D-ribosyl)glycinamide: step 1/2. In terms of biological role, phosphoribosylformylglycinamidine synthase involved in the purines biosynthetic pathway. Catalyzes the ATP-dependent conversion of formylglycinamide ribonucleotide (FGAR) and glutamine to yield formylglycinamidine ribonucleotide (FGAM) and glutamate. The sequence is that of Phosphoribosylformylglycinamidine synthase from Pectobacterium atrosepticum (strain SCRI 1043 / ATCC BAA-672) (Erwinia carotovora subsp. atroseptica).